The chain runs to 425 residues: Testicular acid phosphatase (425 aa).

A signal peptide spans 1–27 (MAEPGSQGHTVGPLLLLLLLLLPRALP). Residues 28 to 392 (EGPLLFVALV…EPASPPATVP (365 aa)) lie on the Extracellular side of the membrane. Residue His-40 is the Nucleophile of the active site. Disulfide bonds link Cys-158-Cys-378, Cys-213-Cys-311, and Cys-353-Cys-357. The active-site Proton donor is Asp-288. A helical membrane pass occupies residues 393–413 (LLAGAVAVLAVLSLGLGLLAW). Over 414 to 425 (RPRCLRALGGTV) the chain is Cytoplasmic.

Belongs to the histidine acid phosphatase family. As to quaternary structure, homodimer. Post-translationally, glycosylated.

It localises to the membrane. It catalyses the reaction a phosphate monoester + H2O = an alcohol + phosphate. In terms of biological role, may dephosphorylate receptor tyrosine-protein kinase ERBB4 and inhibits its ligand-induced proteolytic cleavage. May play a role in odontogenesis. This Mus musculus (Mouse) protein is Testicular acid phosphatase.